The primary structure comprises 325 residues: Acetyl-coenzyme A carboxylase carboxyl transferase subunit alpha (325 aa).

The region spanning 35–292 is the CoA carboxyltransferase C-terminal domain; it reads EINKLEARLE…DDVLKRSLRE (258 aa).

This sequence belongs to the AccA family. In terms of assembly, acetyl-CoA carboxylase is a heterohexamer composed of biotin carboxyl carrier protein (AccB), biotin carboxylase (AccC) and two subunits each of ACCase subunit alpha (AccA) and ACCase subunit beta (AccD).

It localises to the cytoplasm. The enzyme catalyses N(6)-carboxybiotinyl-L-lysyl-[protein] + acetyl-CoA = N(6)-biotinyl-L-lysyl-[protein] + malonyl-CoA. It participates in lipid metabolism; malonyl-CoA biosynthesis; malonyl-CoA from acetyl-CoA: step 1/1. Component of the acetyl coenzyme A carboxylase (ACC) complex. First, biotin carboxylase catalyzes the carboxylation of biotin on its carrier protein (BCCP) and then the CO(2) group is transferred by the carboxyltransferase to acetyl-CoA to form malonyl-CoA. This is Acetyl-coenzyme A carboxylase carboxyl transferase subunit alpha from Anoxybacillus flavithermus (strain DSM 21510 / WK1).